A 251-amino-acid polypeptide reads, in one-letter code: Hydroxyacylglutathione hydrolase (251 aa).

Zn(2+)-binding residues include histidine 53, histidine 55, aspartate 57, histidine 58, histidine 110, aspartate 127, and histidine 165.

The protein belongs to the metallo-beta-lactamase superfamily. Glyoxalase II family. Monomer. The cofactor is Zn(2+).

It carries out the reaction an S-(2-hydroxyacyl)glutathione + H2O = a 2-hydroxy carboxylate + glutathione + H(+). It functions in the pathway secondary metabolite metabolism; methylglyoxal degradation; (R)-lactate from methylglyoxal: step 2/2. Its function is as follows. Thiolesterase that catalyzes the hydrolysis of S-D-lactoyl-glutathione to form glutathione and D-lactic acid. The protein is Hydroxyacylglutathione hydrolase of Salmonella paratyphi A (strain ATCC 9150 / SARB42).